A 199-amino-acid chain; its full sequence is Superoxide dismutase [Mn/Fe] 2 (199 aa).

Fe(3+)-binding residues include H27, H81, D161, and H165. Mn(2+) is bound by residues H27, H81, D161, and H165.

This sequence belongs to the iron/manganese superoxide dismutase family. Homodimer. Can also form a heterodimer with SodA. Mn(2+) serves as cofactor. The cofactor is Fe(3+).

It catalyses the reaction 2 superoxide + 2 H(+) = H2O2 + O2. Destroys superoxide anion radicals which are normally produced within the cells and which are toxic to biological systems. Catalyzes the dismutation of superoxide anion radicals into O2 and H2O2 by successive reduction and oxidation of the transition metal ion at the active site. In Staphylococcus aureus (strain bovine RF122 / ET3-1), this protein is Superoxide dismutase [Mn/Fe] 2 (sodM).